The following is a 179-amino-acid chain: Ribosomal RNA small subunit methyltransferase G (179 aa).

S-adenosyl-L-methionine-binding positions include Gly54, Phe59, 105–106 (IE), and Arg121.

It belongs to the methyltransferase superfamily. RNA methyltransferase RsmG family.

Its subcellular location is the cytoplasm. The catalysed reaction is guanosine(527) in 16S rRNA + S-adenosyl-L-methionine = N(7)-methylguanosine(527) in 16S rRNA + S-adenosyl-L-homocysteine. In terms of biological role, specifically methylates the N7 position of guanine in position 527 of 16S rRNA. In Helicobacter bizzozeronii, this protein is Ribosomal RNA small subunit methyltransferase G.